The sequence spans 145 residues: Ribosome maturation factor RimP (145 aa).

This sequence belongs to the RimP family.

Its subcellular location is the cytoplasm. In terms of biological role, required for maturation of 30S ribosomal subunits. The chain is Ribosome maturation factor RimP from Borreliella afzelii (strain PKo) (Borrelia afzelii).